The following is a 153-amino-acid chain: Ribosomal RNA large subunit methyltransferase H (153 aa).

The S-adenosyl-L-methionine site is built by Leu71 and Gly102.

The protein belongs to the RNA methyltransferase RlmH family. As to quaternary structure, homodimer.

Its subcellular location is the cytoplasm. It catalyses the reaction pseudouridine(1915) in 23S rRNA + S-adenosyl-L-methionine = N(3)-methylpseudouridine(1915) in 23S rRNA + S-adenosyl-L-homocysteine + H(+). Its function is as follows. Specifically methylates the pseudouridine at position 1915 (m3Psi1915) in 23S rRNA. This Anaeromyxobacter dehalogenans (strain 2CP-C) protein is Ribosomal RNA large subunit methyltransferase H.